A 592-amino-acid chain; its full sequence is Bifunctional enzyme BirA/CoaX (592 aa).

A biotin--protein ligase region spans residues 1–329 (MTVLKPSHWR…ISLRPDNRSV (329 aa)). The 177-residue stretch at 83–259 (QTALKHECAS…ELGAVLEQYA (177 aa)) folds into the BPL/LPL catalytic domain. Positions 336–592 (DSERFLLLEG…AAEGGESEHA (257 aa)) are type III pantothenate kinase. 344–351 (EGGNSRLK) serves as a coordination point for ATP. Residues Y426 and 433–436 (GSDR) contribute to the substrate site. D435 (proton acceptor) is an active-site residue. Position 458 (T458) interacts with ATP. T508 contributes to the substrate binding site.

It in the N-terminal section; belongs to the biotin--protein ligase family. In the C-terminal section; belongs to the type III pantothenate kinase family. It depends on NH4(+) as a cofactor. K(+) serves as cofactor.

The protein resides in the cytoplasm. The enzyme catalyses biotin + L-lysyl-[protein] + ATP = N(6)-biotinyl-L-lysyl-[protein] + AMP + diphosphate + H(+). It carries out the reaction (R)-pantothenate + ATP = (R)-4'-phosphopantothenate + ADP + H(+). Its pathway is cofactor biosynthesis; coenzyme A biosynthesis; CoA from (R)-pantothenate: step 1/5. Functionally, activates biotin to form biotinyl-5'-adenylate and transfers the biotin moiety to biotin-accepting proteins. Its function is as follows. Catalyzes the phosphorylation of pantothenate (Pan), the first step in CoA biosynthesis. The protein is Bifunctional enzyme BirA/CoaX (birA/coaX) of Neisseria gonorrhoeae (strain ATCC 700825 / FA 1090).